We begin with the raw amino-acid sequence, 271 residues long: Putative phosphoenolpyruvate synthase regulatory protein (271 aa).

Residue 151–158 (GVSRSGKT) coordinates ADP.

Belongs to the pyruvate, phosphate/water dikinase regulatory protein family. PSRP subfamily.

The catalysed reaction is [pyruvate, water dikinase] + ADP = [pyruvate, water dikinase]-phosphate + AMP + H(+). It catalyses the reaction [pyruvate, water dikinase]-phosphate + phosphate + H(+) = [pyruvate, water dikinase] + diphosphate. In terms of biological role, bifunctional serine/threonine kinase and phosphorylase involved in the regulation of the phosphoenolpyruvate synthase (PEPS) by catalyzing its phosphorylation/dephosphorylation. This Burkholderia orbicola (strain MC0-3) protein is Putative phosphoenolpyruvate synthase regulatory protein.